We begin with the raw amino-acid sequence, 315 residues long: Borealin (315 aa).

Disordered stretches follow at residues 103 to 126 (IEGHAPSATGSRNDEEDSSIGASG) and 138 to 226 (LRST…TPPM). Thr-146 bears the Phosphothreonine mark. At Ser-152 the chain carries Phosphoserine. Residues 153 to 162 (ARARRARRSR) show a composition bias toward basic residues. Ser-163 carries the post-translational modification Phosphoserine. The segment covering 178–188 (SISSSSSSSRN) has biased composition (low complexity). At Ser-205 the chain carries Phosphoserine. Thr-209 bears the Phosphothreonine mark. Phosphoserine is present on residues Ser-218, Ser-220, and Ser-244.

The protein belongs to the borealin family. In terms of assembly, component of the CPC complex. In terms of tissue distribution, ubiquitously expressed in the early embryo. Expression is restricted to the ventral nerve cord and brain during later embryonic stages.

The protein resides in the nucleus. The protein localises to the chromosome. Its subcellular location is the centromere. It localises to the cytoplasm. It is found in the cytoskeleton. The protein resides in the spindle. Component of the chromosomal passenger complex (CPC), a complex that acts as a key regulator of embryonic mitosis. The CPC complex has essential functions at the centromere for ensuring sister chromatid cohesion, recruitment of the CPC to kinetochores, and chromosome alignment and segregation. There is no function in meiotic histone phosphorylation or spindle formation. The sequence is that of Borealin (borr) from Drosophila melanogaster (Fruit fly).